A 113-amino-acid chain; its full sequence is Large ribosomal subunit protein eL31B (113 aa).

It belongs to the eukaryotic ribosomal protein eL31 family. Component of the large ribosomal subunit (LSU). Mature yeast ribosomes consist of a small (40S) and a large (60S) subunit. The 40S small subunit contains 1 molecule of ribosomal RNA (18S rRNA) and 33 different proteins (encoded by 57 genes). The large 60S subunit contains 3 rRNA molecules (25S, 5.8S and 5S rRNA) and 46 different proteins (encoded by 81 genes).

The protein resides in the cytoplasm. Functionally, component of the ribosome, a large ribonucleoprotein complex responsible for the synthesis of proteins in the cell. The small ribosomal subunit (SSU) binds messenger RNAs (mRNAs) and translates the encoded message by selecting cognate aminoacyl-transfer RNA (tRNA) molecules. The large subunit (LSU) contains the ribosomal catalytic site termed the peptidyl transferase center (PTC), which catalyzes the formation of peptide bonds, thereby polymerizing the amino acids delivered by tRNAs into a polypeptide chain. The nascent polypeptides leave the ribosome through a tunnel in the LSU and interact with protein factors that function in enzymatic processing, targeting, and the membrane insertion of nascent chains at the exit of the ribosomal tunnel. This Saccharomyces cerevisiae (strain ATCC 204508 / S288c) (Baker's yeast) protein is Large ribosomal subunit protein eL31B.